The following is a 114-amino-acid chain: Protein U68 (114 aa).

This sequence belongs to the herpesviridae UL96 family.

In Homo sapiens (Human), this protein is Protein U68 (U68).